Reading from the N-terminus, the 436-residue chain is UDP-N-acetylglucosamine 1-carboxyvinyltransferase (436 aa).

Residue 22-23 coordinates phosphoenolpyruvate; that stretch reads KN. UDP-N-acetyl-alpha-D-glucosamine is bound at residue R96. C120 acts as the Proton donor in catalysis. 2-(S-cysteinyl)pyruvic acid O-phosphothioketal is present on C120. UDP-N-acetyl-alpha-D-glucosamine is bound by residues 125–129, D309, and I331; that span reads RPIDL.

The protein belongs to the EPSP synthase family. MurA subfamily.

The protein resides in the cytoplasm. The catalysed reaction is phosphoenolpyruvate + UDP-N-acetyl-alpha-D-glucosamine = UDP-N-acetyl-3-O-(1-carboxyvinyl)-alpha-D-glucosamine + phosphate. The protein operates within cell wall biogenesis; peptidoglycan biosynthesis. In terms of biological role, cell wall formation. Adds enolpyruvyl to UDP-N-acetylglucosamine. This is UDP-N-acetylglucosamine 1-carboxyvinyltransferase from Acidobacterium capsulatum (strain ATCC 51196 / DSM 11244 / BCRC 80197 / JCM 7670 / NBRC 15755 / NCIMB 13165 / 161).